The chain runs to 361 residues: Alcohol dehydrogenase 9 (361 aa).

8 residues coordinate Zn(2+): Cys-51, Thr-53, His-73, Cys-104, Cys-107, Cys-110, Cys-118, and Cys-167. The an alcohol site is built by Thr-53 and His-73. Thr-53 serves as a coordination point for NAD(+). NAD(+) is bound by residues 192–197, Lys-221, 278–280, and Lys-356; these read GLGGLG and LGA.

It belongs to the zinc-containing alcohol dehydrogenase family. Class-III subfamily. In terms of assembly, homodimer. It depends on Zn(2+) as a cofactor.

In Catharanthus roseus (Madagascar periwinkle), this protein is Alcohol dehydrogenase 9.